A 351-amino-acid polypeptide reads, in one-letter code: F-box protein At1g47810 (351 aa).

The F-box domain maps to leucine 8–phenylalanine 54.

This is F-box protein At1g47810 from Arabidopsis thaliana (Mouse-ear cress).